Here is a 218-residue protein sequence, read N- to C-terminus: Protein N-lysine methyltransferase METTL21A (218 aa).

S-adenosyl-L-methionine is bound by residues W47, 73–75 (GAG), D94, W125, and A143.

It belongs to the methyltransferase superfamily. METTL21 family. As to quaternary structure, interacts with heat shock protein 70 family members; at least some of these proteins are methylation substrates.

Its subcellular location is the cytoplasm. It carries out the reaction L-lysyl-[protein] + 3 S-adenosyl-L-methionine = N(6),N(6),N(6)-trimethyl-L-lysyl-[protein] + 3 S-adenosyl-L-homocysteine + 3 H(+). Protein-lysine methyltransferase that selectively trimethylates residues in heat shock protein 70 (HSP70) family members. Contributes to the in vivo trimethylation of Lys residues in HSPA1 and HSPA8. In vitro methylates 'Lys-561' in HSPA1, 'Lys-564' in HSPA2, 'Lys-585' in HSPA5, 'Lys-563' in HSPA6 and 'Lys-561' in HSPA8. The sequence is that of Protein N-lysine methyltransferase METTL21A (METTL21A) from Homo sapiens (Human).